The following is a 577-amino-acid chain: Arginine--tRNA ligase (577 aa).

Residues 122–132 (PNVAKEMHVGH) carry the 'HIGH' region motif.

This sequence belongs to the class-I aminoacyl-tRNA synthetase family. As to quaternary structure, monomer.

It is found in the cytoplasm. It carries out the reaction tRNA(Arg) + L-arginine + ATP = L-arginyl-tRNA(Arg) + AMP + diphosphate. This chain is Arginine--tRNA ligase, found in Edwardsiella ictaluri (strain 93-146).